The sequence spans 427 residues: Interferon regulatory factor 3 (427 aa).

Residue Thr-3 is modified to Phosphothreonine. Positions 5 to 111 (KPRILPWLVS…DPHKIYEFVN (107 aa)) form a DNA-binding region, IRF tryptophan pentad repeat. Residue Ser-14 is modified to Phosphoserine. Thr-75 bears the Phosphothreonine mark. The segment covering 91-107 (RLAEDRSKDPHDPHKIY) has biased composition (basic and acidic residues). The interval 91–136 (RLAEDRSKDPHDPHKIYEFVNSGVGDFSQPDTSPDTNGGGSTSDTQ) is disordered. Phosphoserine occurs at positions 97 and 123. A Nuclear export signal motif is present at residues 139 to 149 (ILDELLGNMVL). Residues 141–427 (DELLGNMVLA…GMDFQGPGES (287 aa)) are mediates interaction with ZDHHC11. Ser-175 carries the (Microbial infection) Phosphoserine modification. Thr-180 is modified (phosphothreonine). Position 188 is a phosphoserine (Ser-188). Residue Lys-193 forms a Glycyl lysine isopeptide (Lys-Gly) (interchain with G-Cter in ISG15) linkage. Residues 200–360 (EEWEFEVTAF…SWPQDQPWTK (161 aa)) form an interaction with HERC5 region. Phosphothreonine is present on residues Thr-237, Thr-244, and Thr-253. Cys-267 and Cys-289 are joined by a disulfide. Glycyl lysine isopeptide (Lys-Gly) (interchain with G-Cter in ISG15) cross-links involve residues Lys-360 and Lys-366. The residue at position 366 (Lys-366) is an N6-acetyllysine. Ser-385 carries the post-translational modification Phosphoserine. Ser-386 carries the diphosphoserine modification. Ser-386 is subject to Phosphoserine; by TBK1. Ser-396 is subject to Phosphoserine; by IKKE and TBK1. Ser-398 carries the post-translational modification Phosphoserine. At Thr-404 the chain carries Phosphothreonine. Ser-427 bears the Phosphoserine mark.

This sequence belongs to the IRF family. Monomer. Homodimer; phosphorylation-induced. Interacts (when phosphorylated) with CREBBP. Interacts with MAVS (via phosphorylated pLxIS motif). Interacts with TICAM1 (via phosphorylated pLxIS motif). Interacts with STING1 (via phosphorylated pLxIS motif). Interacts with IKBKE and TBK1. Interacts with TICAM2. Interacts with RBCK1. Interacts with HERC5. Interacts with DDX3X (phosphorylated at 'Ser-102'); the interaction allows the phosphorylation and activation of IRF3 by IKBKE. Interacts with TRIM21 and ULK1, in the presence of TRIM21; this interaction leads to IRF3 degradation by autophagy. Interacts with RIOK3; RIOK3 probably mediates the interaction of TBK1 with IRF3. Interacts with ILRUN; the interaction inhibits IRF3 binding to its DNA consensus sequence. Interacts with LYAR; this interaction impairs IRF3 DNA-binding activity. Interacts with TRAF3. Interacts with ZDHHC11; ZDHHC11 recruits IRF3 to STING1 upon DNA virus infection and thereby promotes IRF3 activation. Interacts with HSP90AA1; the interaction mediates IRF3 association with TOMM70. Interacts with BCL2; the interaction decreases upon Sendai virus infection. Interacts with BAX; the interaction is direct, increases upon Sendai virus infection and mediates the formation of the apoptosis complex TOMM70:HSP90AA1:IRF3:BAX. Interacts with DDX56. Interacts with NBR1. As to quaternary structure, (Microbial infection) Interacts with rotavirus A NSP1 (via pLxIS motif); this interaction leads to the proteasome-dependent degradation of IRF3. In terms of assembly, (Microbial infection) Interacts with herpes virus 8/HHV-8 protein VIRF1. (Microbial infection) Interacts with Seneca Valley virus protease 3C; this interaction is involved in the suppression of IRF3 expression and phosphorylation by the virus. As to quaternary structure, (Microbial infection) Interacts with herpes virus 2/HHV-2 protein ICP27; this interaction inhibits IRF3 phosphorylation and nuclear translocation. In terms of assembly, (Microbial infection) Interacts with human cytomegalovirus protein UL44; this interaction prevents IRF3 binding to its promoters. (Microbial infection) Interacts with the two fragments of MERS-COV protein N produced by CASP6 through proteolytic cleavage; both interactions inhibit IRF3 nuclear translocation after activation and IFN signaling. Post-translationally, constitutively phosphorylated on many Ser/Thr residues. Activated following phosphorylation by TBK1 and IKBKE. Innate adapter proteins, such as MAVS, STING1 or TICAM1, are first activated by viral RNA, cytosolic DNA, and bacterial lipopolysaccharide (LPS), respectively, leading to activation of the kinases TBK1 and IKBKE. These kinases then phosphorylate the adapter proteins on the pLxIS motif, leading to recruitment of IRF3, thereby licensing IRF3 for phosphorylation by TBK1. Phosphorylation at Ser-386 is followed by pyrophosphorylation at the same residue, promoting phosphorylation at Ser-396. Phosphorylated IRF3 dissociates from the adapter proteins, dimerizes, and then enters the nucleus to induce IFNs. In terms of processing, pyrophosphorylated by UAP1 following phosphorylation at Ser-386 by TBK1. Pyrophosphorylation promotes subsequent phosphorylation at Ser-396, leading to homodimerization of IRF3. Acetylation at Lys-366 by KAT8 inhibits recruimtent to promoters and transcription factor activity. Acetylation by KAT8 is promoted by phosphorylation at Ser-396. Post-translationally, ubiquitinated; ubiquitination involves RBCK1 leading to proteasomal degradation. Polyubiquitinated; ubiquitination involves TRIM21 leading to proteasomal degradation. Ubiquitinated by UBE3C, leading to its degradation. Deubiquitinated by USP5 on both 'Lys-48'-linked unanchored and 'Lys-63'-linked anchored polyubiquitin, leading to inhibition of anti-RNA viral innate immunity. In terms of processing, ISGylated by HERC5 resulting in sustained IRF3 activation and in the inhibition of IRF3 ubiquitination by disrupting PIN1 binding. The phosphorylation state of IRF3 does not alter ISGylation. Proteolytically cleaved by apoptotic caspases during apoptosis, leading to its inactivation. Cleavage by CASP3 during virus-induced apoptosis inactivates it, preventing cytokine overproduction. Post-translationally, (Microbial infection) ISGylated. ISGylation is cleaved and removed by SARS-COV-2 nsp3 which attenuates type I interferon responses. In terms of processing, (Microbial infection) Phosphorylation and subsequent activation of IRF3 is inhibited by vaccinia virus protein E3. (Microbial infection) Phosphorylated by herpes simplex virus 1/HHV-1 US3 at Ser-175 to prevent IRF3 activation. In terms of tissue distribution, expressed constitutively in a variety of tissues.

It is found in the cytoplasm. The protein localises to the nucleus. Its subcellular location is the mitochondrion. In the absence of viral infection, maintained as a monomer in an autoinhibited state. Phosphorylation by TBK1 and IKBKE disrupts this autoinhibition leading to the liberation of the DNA-binding and dimerization activities and its nuclear localization where it can activate type I IFN and ISG genes. Phosphorylation and activation follow the following steps: innate adapter proteins, such as MAVS, STING1 or TICAM1, are first activated by viral RNA, cytosolic DNA and bacterial lipopolysaccharide (LPS), respectively, leading to activation of the kinases TBK1 and IKBKE. These kinases then phosphorylate the adapter proteins on their pLxIS motif, leading to recruitment of IRF3, thereby licensing IRF3 for phosphorylation by TBK1. Phosphorylated IRF3 dissociates from the adapter proteins, dimerizes, and then enters the nucleus to induce IFNs. With respect to regulation, (Microbial infection) Activated upon coronavirus SARS-CoV-2 infection. Its function is as follows. Key transcriptional regulator of type I interferon (IFN)-dependent immune responses which plays a critical role in the innate immune response against DNA and RNA viruses. Regulates the transcription of type I IFN genes (IFN-alpha and IFN-beta) and IFN-stimulated genes (ISG) by binding to an interferon-stimulated response element (ISRE) in their promoters. Acts as a more potent activator of the IFN-beta (IFNB) gene than the IFN-alpha (IFNA) gene and plays a critical role in both the early and late phases of the IFNA/B gene induction. Found in an inactive form in the cytoplasm of uninfected cells and following viral infection, double-stranded RNA (dsRNA), or toll-like receptor (TLR) signaling, is phosphorylated by IKBKE and TBK1 kinases. This induces a conformational change, leading to its dimerization and nuclear localization and association with CREB binding protein (CREBBP) to form dsRNA-activated factor 1 (DRAF1), a complex which activates the transcription of the type I IFN and ISG genes. Can activate distinct gene expression programs in macrophages and can induce significant apoptosis in primary macrophages. In response to Sendai virus infection, is recruited by TOMM70:HSP90AA1 to mitochondrion and forms an apoptosis complex TOMM70:HSP90AA1:IRF3:BAX inducing apoptosis. Key transcription factor regulating the IFN response during SARS-CoV-2 infection. This chain is Interferon regulatory factor 3, found in Homo sapiens (Human).